Reading from the N-terminus, the 483-residue chain is Rhamnulokinase (483 aa).

11-15 (ASSGR) lines the ATP pocket. Residues G79 and 234–236 (HDT) each bind substrate. The active-site Proton acceptor is the D235. T257 contacts ATP. Residue N294 participates in substrate binding. Q302 contacts ATP. A disulfide bridge links C352 with C369. Residue G401 coordinates ATP.

Belongs to the rhamnulokinase family. Mg(2+) serves as cofactor.

It catalyses the reaction L-rhamnulose + ATP = L-rhamnulose 1-phosphate + ADP + H(+). The protein operates within carbohydrate degradation; L-rhamnose degradation; glycerone phosphate from L-rhamnose: step 2/3. In terms of biological role, involved in the catabolism of L-rhamnose (6-deoxy-L-mannose). Catalyzes the transfer of the gamma-phosphate group from ATP to the 1-hydroxyl group of L-rhamnulose to yield L-rhamnulose 1-phosphate. The protein is Rhamnulokinase of Listeria monocytogenes serotype 4b (strain CLIP80459).